The sequence spans 383 residues: MGRAPCCDKVGLKRGRWTAEEDQILANYIAEHGEGSWRSLPKNAGLLRCGKSCRLRWINYLRADVKRGNISKEEEDIIIKLHATLGNRWSLIASHFPGRTDNEIKNYWNSHLSRQIHTYRRKYTAAPDTTVIIDMSKLHSAEKRRGGRTPGWSPKSSSANTTTNTTSSKTNKSKETDPGPGLKSACDAKGASSPPTAATTTSAASSPRHSDGARSAVVDPDPNQPNSSSGSTAEGPCSGEDATGPWELDPIDLGDLWEAESEIDALMSMDAPLEGFDAVVGEAQAQVDDLFDMDMDWDGFAAHLWGGPEQNDHIAELQQAAEPQATAAACTPNEHEPQVAAAAAACTPDEHEPQAAAAAAAATCTPDEHGLEAFETWLLSDSF.

HTH myb-type domains lie at 9–61 (KVGL…INYL) and 62–116 (RADV…SRQI). 2 DNA-binding regions (H-T-H motif) span residues 37-61 (WRSL…INYL) and 89-112 (WSLI…NSHL). Residues 136-250 (SKLHSAEKRR…DATGPWELDP (115 aa)) form a disordered region. Composition is skewed to low complexity over residues 155–170 (KSSS…SSKT) and 191–207 (ASSP…ASSP).

It localises to the nucleus. The protein operates within pigment biosynthesis. Its function is as follows. Transcription factor involved in regulating the biosynthetic pathway of flavan-4-ol-derived red phlobaphene and red-brown 3-deoxyanthocyanidin (3-DA) pigments. Regulates transcription of chalcone synthase, chalcone isomerase, dihydroflavonol reductase and flavonoid 3'-hydroxylase genes required for the phlobaphene and 3-DA biosynthesis. Transcription of these genes is activated in mesocotyls in response to ingress of non-pathogenic fungus C.heterostrophus. Regulates the production of 3-DA phytoalexins (luteolinidin, 5-methoxyluteolinidin, apigeninidin and 7-methoxyapigeninidin) in mesocotyls in response to C.heterostrophus and corn leaf aphid (CLA) R.maidis. Involved in resistance against anthracnose leaf blight (ALB) caused by the pathogenic C.sublineolum fungus by inducing the production of 3-DA phytoalexins. Confers resistance, also by inducing the production of 3-DA phytoalexins, against CLA R.maidis, which is an insect and a pest. The polypeptide is Transcription factor Y1 (Sorghum bicolor (Sorghum)).